The primary structure comprises 344 residues: Uroporphyrinogen decarboxylase (344 aa).

Residues 23-27 (RQAGR), Asp73, Tyr149, Thr204, and His321 each bind substrate.

This sequence belongs to the uroporphyrinogen decarboxylase family. Homodimer.

It is found in the cytoplasm. The catalysed reaction is uroporphyrinogen III + 4 H(+) = coproporphyrinogen III + 4 CO2. It functions in the pathway porphyrin-containing compound metabolism; protoporphyrin-IX biosynthesis; coproporphyrinogen-III from 5-aminolevulinate: step 4/4. Catalyzes the decarboxylation of four acetate groups of uroporphyrinogen-III to yield coproporphyrinogen-III. This chain is Uroporphyrinogen decarboxylase, found in Francisella philomiragia subsp. philomiragia (strain ATCC 25017 / CCUG 19701 / FSC 153 / O#319-036).